The sequence spans 260 residues: Proliferating cell nuclear antigen (260 aa).

Residues 61-80 mediate DNA binding; that stretch reads RCDRNISMGMNLGSMAKILK.

The protein belongs to the PCNA family. In terms of assembly, homotrimer. Forms a complex with activator 1 heteropentamer in the presence of ATP.

The protein resides in the nucleus. Its function is as follows. This protein is an auxiliary protein of DNA polymerase delta and is involved in the control of eukaryotic DNA replication by increasing the polymerase's processibility during elongation of the leading strand. This Sarcophaga crassipalpis (Flesh fly) protein is Proliferating cell nuclear antigen (PCNA).